The chain runs to 439 residues: Enolase (439 aa).

Substrate is bound by residues H160 and E169. E212 acts as the Proton donor in catalysis. Mg(2+)-binding residues include D247, E296, and D323. 2 residues coordinate substrate: E296 and D323. K348 (proton acceptor) is an active-site residue. Residues 375–378 (SHRS) and K399 each bind substrate.

This sequence belongs to the enolase family. In terms of assembly, homodimer. Mg(2+) is required as a cofactor.

The protein localises to the cytoplasm. It catalyses the reaction (2R)-2-phosphoglycerate = phosphoenolpyruvate + H2O. Its pathway is carbohydrate degradation; glycolysis; pyruvate from D-glyceraldehyde 3-phosphate: step 4/5. This chain is Enolase (ENO), found in Rhodotorula mucilaginosa (Yeast).